The sequence spans 131 residues: D-ribose pyranase (131 aa).

The active-site Proton donor is the His-20. Substrate is bound by residues Asp-28, His-98, and 120–122 (YAN).

This sequence belongs to the RbsD / FucU family. RbsD subfamily. Homodecamer.

Its subcellular location is the cytoplasm. The enzyme catalyses beta-D-ribopyranose = beta-D-ribofuranose. The protein operates within carbohydrate metabolism; D-ribose degradation; D-ribose 5-phosphate from beta-D-ribopyranose: step 1/2. Functionally, catalyzes the interconversion of beta-pyran and beta-furan forms of D-ribose. In Bacillus cereus (strain 03BB102), this protein is D-ribose pyranase.